We begin with the raw amino-acid sequence, 978 residues long: uncharacterized protein (978 aa).

The first 27 residues, 1 to 27 (MHSWKKKLVVSQLALACTLAITSQANA), serve as a signal peptide directing secretion. Positions 713-978 (GLADNGGAWV…SANVGVKYTW (266 aa)) constitute an Autotransporter domain.

This is an uncharacterized protein from Salmonella typhimurium (strain LT2 / SGSC1412 / ATCC 700720).